We begin with the raw amino-acid sequence, 79 residues long: Sulfur carrier protein TusA (79 aa).

C17 functions as the Cysteine persulfide intermediate in the catalytic mechanism.

This sequence belongs to the sulfur carrier protein TusA family.

Its subcellular location is the cytoplasm. Functionally, sulfur carrier protein which probably makes part of a sulfur-relay system. This chain is Sulfur carrier protein TusA, found in Pasteurella multocida (strain Pm70).